A 399-amino-acid polypeptide reads, in one-letter code: Argininosuccinate synthase (399 aa).

Residue 8–16 participates in ATP binding; the sequence is AYSGGLDTS. Tyrosine 87 is an L-citrulline binding site. Residue glycine 117 participates in ATP binding. Residues threonine 119, asparagine 123, and aspartate 124 each contribute to the L-aspartate site. Residue asparagine 123 coordinates L-citrulline. L-citrulline contacts are provided by arginine 127, serine 175, glutamate 260, and tyrosine 272.

Belongs to the argininosuccinate synthase family. Type 1 subfamily. Homotetramer.

It is found in the cytoplasm. It catalyses the reaction L-citrulline + L-aspartate + ATP = 2-(N(omega)-L-arginino)succinate + AMP + diphosphate + H(+). Its pathway is amino-acid biosynthesis; L-arginine biosynthesis; L-arginine from L-ornithine and carbamoyl phosphate: step 2/3. This Rhodococcus erythropolis (strain PR4 / NBRC 100887) protein is Argininosuccinate synthase.